Here is a 326-residue protein sequence, read N- to C-terminus: Intracellular serine protease (326 aa).

One can recognise a Peptidase S8 domain in the interval 23–303 (PRGVEMIQAP…NGLLYLTAVE (281 aa)). Catalysis depends on charge relay system residues Asp-49, His-86, and Ser-244.

It belongs to the peptidase S8 family.

Functionally, involved in the generation of beta- and alpha-amylases from the large amylase precursor. This Paenibacillus polymyxa (Bacillus polymyxa) protein is Intracellular serine protease (isp).